A 470-amino-acid polypeptide reads, in one-letter code: MTASETIATAINQIDEKKEKLKKAFDDLQAHRSLLSPSFSLSWSEIDSHFSSLQSSLASRFRLLHSTSPLEHDSYRIDASDAGKSSSSEEVSEQPVVEPELRALCEKIDGIGLIKYLIRIWDDETPLNQEVSAAIRYSPDTASMVLDAIEGSNYTPSSSGRSFDVRRVFVLLMEVLIEINANITVDTRNRAKKLAYHWKSKVGVKPFEALVFLHLVAAFELGSEFDTEELSDYVFMIAKYKQATLVCNKIGVDRKRVGKLIKTLLDSGKPILAVKFMYECGMTDEFEPIPVLKSYIKDCREAALRVCVEDNYSLKSQNEASDKEVSALKPLIKIIKDQNLESEFTQEKVEERVEELEKNKALRKRNTTNPPKQEPQQKGKKRTRDCKNGSQVPVPSQQLLSRPEALLMPEHSHHGLQLNPYGLMTSAFSGVVVNPLTGLFGSGATPQSLYYAQQTGYVLPPQYHPPYYSQ.

The stretch at 336–369 (KDQNLESEFTQEKVEERVEELEKNKALRKRNTTN) forms a coiled coil. Positions 355–400 (ELEKNKALRKRNTTNPPKQEPQQKGKKRTRDCKNGSQVPVPSQQLL) are disordered. Polar residues predominate over residues 388–400 (NGSQVPVPSQQLL).

This sequence belongs to the Frigida family. In terms of assembly, component of the transcription activator complex FRI-C composed of FRI, FRL1, SUF4, FLX and FES1. Interacts with FRI and SUF4. As to expression, expressed during seed development and in dry seed. Preferentially expressed in the chalazal endosperm during early stages of seed development.

Its function is as follows. Required for FRI-mediated up-regulation of FLC transcripts, but not redundant with FRI and only partially redundant with FRL2. Required for the stabilization of the FRI-C complex. The polypeptide is FRIGIDA-like protein 1 (FRL1) (Arabidopsis thaliana (Mouse-ear cress)).